The primary structure comprises 392 residues: MELVAGCYEQVLFGFAVHPEPEACGDHEQWTLVADFTHHAHTASLSAVAVNSRFVVTGSKDETIHIYDMKKKIEHGALVHHSGTITCLKFYGNRHLISGAEDGLICIWDAKKWECLKSIKAHKGQVTFLSIHPSGKLALSVGTDKTLRTWNLVEGRSAFIKNIKQNAHIVEWSPRGEQYVVIIQNKIDIYQLDTASISGTITNEKRISSVKFLSESVLAVAGDEEVIRFFDCDSLVCLCEFKAHENRVKDMFSFEIPEHHVIVSASSDGFIKMWKLKQDKKVPPSLLCEINTNARLTCLGVWLDKVADMKESLPPAAEPSPVSKEQSKIGKKEPGDTVHKEEKRSKPNTKKRGLTGDSKKATKESGLISTKKRKMVEMLEKKRKKKKIKTMQ.

WD repeat units lie at residues 33 to 72, 73 to 113, 114 to 155, 156 to 195, 196 to 235, and 236 to 275; these read VADF…MKKK, IEHG…AKKW, ECLK…LVEG, RSAF…LDTA, SISG…CDSL, and VCLC…KMWK. The interval 312 to 392 is disordered; sequence SLPPAAEPSP…RKKKKIKTMQ (81 aa). Phosphoserine is present on serine 320. The span at 325–345 shows a compositional bias: basic and acidic residues; that stretch reads EQSKIGKKEPGDTVHKEEKRS. Over residues 381–392 the composition is skewed to basic residues; the sequence is KKRKKKKIKTMQ.

In terms of assembly, interacts with PAK1. Expressed in brain, colon, heart, kidney, liver, lung, muscle, peripheral blood leukocytes, placenta, small intestine, spleen and thymus.

The protein resides in the nucleus. It is found in the nucleolus. Functionally, negatively regulates the PAK1 kinase. PAK1 is a member of the PAK kinase family, which has been shown to play a positive role in the regulation of signaling pathways involving MAPK8 and RELA. PAK1 exists as an inactive homodimer, which is activated by binding of small GTPases such as CDC42 to an N-terminal regulatory domain. PAK1IP1 also binds to the N-terminus of PAK1, and inhibits the specific activation of PAK1 by CDC42. May be involved in ribosomal large subunit assembly. This Homo sapiens (Human) protein is p21-activated protein kinase-interacting protein 1 (PAK1IP1).